The chain runs to 531 residues: Polyamine aminopropyltransferase 1 (531 aa).

The next 7 helical transmembrane spans lie at 27–47 (FLLLLAVFLCAACGLVYELAL), 59–79 (VLQTSVVISVMVFAMGVGSLA), 96–116 (GVLALVGGLSVLMLYAAFAWL), 122–142 (AMIVVSLVVGLLIGAEIPLLM), 160–180 (MFAVDYIGALVGGLCFPLFLL), 188–208 (GALVVGVVNAVAGVIVVVFIF), and 218–238 (AGLLAGVALVLAALGTTYVLA). The segment at 205 to 476 (VFIFRRQTGR…VLARPGTEAP (272 aa)) is spermidine synthase. A PABS domain is found at 233 to 471 (TTYVLADDLE…GNWGFVLARP (239 aa)). An S-methyl-5'-thioadenosine-binding site is contributed by Q263. Positions 298 and 320 each coordinate spermidine. S-methyl-5'-thioadenosine is bound by residues E340 and 374-375 (DA). D392 acts as the Proton acceptor in catalysis.

It belongs to the spermidine/spermine synthase family. As to quaternary structure, homodimer or homotetramer.

The protein resides in the cell membrane. The enzyme catalyses S-adenosyl 3-(methylsulfanyl)propylamine + putrescine = S-methyl-5'-thioadenosine + spermidine + H(+). The protein operates within amine and polyamine biosynthesis; spermidine biosynthesis; spermidine from putrescine: step 1/1. Catalyzes the irreversible transfer of a propylamine group from the amino donor S-adenosylmethioninamine (decarboxy-AdoMet) to putrescine (1,4-diaminobutane) to yield spermidine. The sequence is that of Polyamine aminopropyltransferase 1 from Streptomyces coelicolor (strain ATCC BAA-471 / A3(2) / M145).